We begin with the raw amino-acid sequence, 1297 residues long: MLDVNFFDELRIGLATADDIRQWSHGEVKKPETINYRTLKPEKDGLFCEKIFGPQRDWECYCGKYKRVRFKGIICERCGVEVTRSKVRRERMGHIELAASVTHIWYFKGVPSRLGYLLDLAPKDLEKIIYFASYVVTSVDAEARHRDLATIENEILAEKRQSENSRDSEIEKRAGKLEADLAELEAEGAKADVRRKVKEGGEREMRQIRDRAQREIDRLDEVLDTFRKLEPKQLVTDELLYRELRDRFGEYFTGGMGAEAIKALVQNMDLDAEAESLRETIRTGKGQRKIRALKRLKVVAAFLNTSNSPLGMVLDCVPVIPPDLRPMVQLDGGRFATSDLNDLYRRVINRNNRLKRLIDLGAPEIIVNNEKRMLQEAVDALFDNGRRGRPVTGPGNRPLKSLSDMLKGKQGRFRQNLLGKRVDYSGRSVIVVGPKLKLHQCGLPKQMALELFKPFVMKRLVDLNHAQNIKSAKRMVERQRPVVWDVLEEVIGEHPVLLNRAPTLHRLGIQAFEPQLVEGKAIQIHPLVCTAFNADFDGDQMAVHVPLSAEAQAEARILMLSSNNILKPADGKPVTMPTQDMIIGLYHLTHRTPGERGEGRAFSSDAEARMAFDNGELHLQAPVKIRLRGLVGVESGPGAEPWTAPEGWVEGDPITVETTLGRVLFNETLPPGYRFVNYEIRKGQLSAIVNDLAERFPKVALAATLDGLKEAGFHWATWSGVTIGMEDVLAPPRKREILGRYEKEADRIDKQYQRGLMTAEERRGELIEIWTKATNEVAKEMDTALPQENPLWKMINSGARGNLLQLRQIAAIRGLVANPKGEIIPRPIKASYREGLSVLEYFISTHGARKGLADTALRTADSGYLTRRLVDVSQDVIIREEDCGTDRAIPMQVGQQAGEAGSLVVHEHAETSVHARTLADDIKGPDGTVVAERGADINSILVDKIVAAGVESVRVRSVLTCESKLGVCGACYGRSLPTGKTVDVGEAVGIIAAQSIGEPGTQLTMRTFHTGGVAGEDITQGLPRVQEIFEARIPKGKAPIADTPGRVRIEDGERSRKIIVVPDDGSDEIAYDKISKRVRLLANDGDHVEVGERLTVGTIDPHELLRILGPRAVQVHLTQEVQEVYRSQGVLIHDKHIEIIIRQMLKRVTVIDSGSTEFLPGVLVDRALFESENRRLVSEGGEPAAGRPVLMGITKASLATDSWLSAASFQETTRVLTDAAIHARSDSLIGLKENVIIGKLIPAGTGISKYRNVRVEPTEEAKAKVYSMTGYPETDYGFGPASGQAVPLDDFDFGSYR.

Zn(2+) is bound by residues cysteine 60, cysteine 62, cysteine 75, and cysteine 78. Mg(2+) contacts are provided by aspartate 535, aspartate 537, and aspartate 539. Zn(2+) contacts are provided by cysteine 883, cysteine 961, cysteine 968, and cysteine 971.

This sequence belongs to the RNA polymerase beta' chain family. In terms of assembly, the RNAP catalytic core consists of 2 alpha, 1 beta, 1 beta' and 1 omega subunit. When a sigma factor is associated with the core the holoenzyme is formed, which can initiate transcription. It depends on Mg(2+) as a cofactor. Zn(2+) serves as cofactor.

It carries out the reaction RNA(n) + a ribonucleoside 5'-triphosphate = RNA(n+1) + diphosphate. Its function is as follows. DNA-dependent RNA polymerase catalyzes the transcription of DNA into RNA using the four ribonucleoside triphosphates as substrates. In Salinispora tropica (strain ATCC BAA-916 / DSM 44818 / JCM 13857 / NBRC 105044 / CNB-440), this protein is DNA-directed RNA polymerase subunit beta'.